We begin with the raw amino-acid sequence, 322 residues long: Undecaprenyl-phosphate 4-deoxy-4-formamido-L-arabinose transferase (322 aa).

The Cytoplasmic segment spans residues 1–235 (MFEIHPVKKV…TCLTTTPLRM (235 aa)). Residues 236–256 (LSLLGSIIAIGGFSIAVLLVI) traverse the membrane as a helical segment. Residues 257–269 (LRLTFGPQWAAEG) lie on the Periplasmic side of the membrane. The helical transmembrane segment at 270–290 (VFMLFAVLFTFIGAQFIGMGL) threads the bilayer. Residues 291–322 (LGEYIGRIYTDVRARPRYFVQQVIRPSSKENE) lie on the Cytoplasmic side of the membrane.

Belongs to the glycosyltransferase 2 family.

It localises to the cell inner membrane. The enzyme catalyses UDP-4-deoxy-4-formamido-beta-L-arabinose + di-trans,octa-cis-undecaprenyl phosphate = 4-deoxy-4-formamido-alpha-L-arabinopyranosyl di-trans,octa-cis-undecaprenyl phosphate + UDP. It functions in the pathway glycolipid biosynthesis; 4-amino-4-deoxy-alpha-L-arabinose undecaprenyl phosphate biosynthesis; 4-amino-4-deoxy-alpha-L-arabinose undecaprenyl phosphate from UDP-4-deoxy-4-formamido-beta-L-arabinose and undecaprenyl phosphate: step 1/2. The protein operates within bacterial outer membrane biogenesis; lipopolysaccharide biosynthesis. In terms of biological role, catalyzes the transfer of 4-deoxy-4-formamido-L-arabinose from UDP to undecaprenyl phosphate. The modified arabinose is attached to lipid A and is required for resistance to polymyxin and cationic antimicrobial peptides. The protein is Undecaprenyl-phosphate 4-deoxy-4-formamido-L-arabinose transferase of Escherichia coli O139:H28 (strain E24377A / ETEC).